We begin with the raw amino-acid sequence, 374 residues long: MAEPGEQLPEEVLALIFRHLPLPDRAAAARVCRAWAAAATCSAVWHDTSISCDCELEGMLPPYLSACLDHVQNLWLEFEPSRKSSRRAATDLLTALTGRTPGLRGLCLECRGEKPLFDAGRDVLDAVHALCGAASALRHLDLRRLPFSLDDALVLQVAHGCPELRSLFLDNRTLVGSVGPGSVLELLEACPCLRALGLHLASLSRTALEALAAPERAPFELLALRCACPEDARAPPLPDEAWAALSLRHPGLQVELELEPVLPAESVTRVLQPAVPVATLRLSLSGDTVGPVRFAARHYAATLRALEVRAAASAELDAALEELAARCARLREVHCFCVVRPSVLHAFRARCPRLRSYTLKVTREPHPWRPTLVA.

Positions 2–48 (AEPGEQLPEEVLALIFRHLPLPDRAAAARVCRAWAAAATCSAVWHDT) constitute an F-box domain.

In terms of assembly, directly interacts with SKP1 and CUL1.

Functionally, substrate-recognition component of the SCF (SKP1-CUL1-F-box protein)-type E3 ubiquitin ligase complex. This chain is F-box/LRR-repeat protein 8 (FBXL8), found in Bos taurus (Bovine).